The primary structure comprises 69 residues: MNKDEAGGNWKQFKGKVKEQWGKLTDDDMTIIEGKRDQLVGKIQERYGYQKDQAEKEVVDWETRNEYRW.

Belongs to the UPF0337 (CsbD) family.

The polypeptide is UPF0337 protein YjbJ (yjbJ) (Escherichia coli O157:H7).